Consider the following 245-residue polypeptide: GTP cyclohydrolase 1 type 2 homolog (245 aa).

Residues His-63, His-64, Asp-100, His-213, and Glu-217 each coordinate a divalent metal cation.

Belongs to the GTP cyclohydrolase I type 2/NIF3 family. Homohexamer.

In Archaeoglobus fulgidus (strain ATCC 49558 / DSM 4304 / JCM 9628 / NBRC 100126 / VC-16), this protein is GTP cyclohydrolase 1 type 2 homolog.